A 315-amino-acid chain; its full sequence is Ribosomal RNA small subunit methyltransferase H (315 aa).

Residues Gly37–His39, Asp57, Asp105, and Gln112 each bind S-adenosyl-L-methionine.

The protein belongs to the methyltransferase superfamily. RsmH family.

The protein localises to the cytoplasm. It carries out the reaction cytidine(1402) in 16S rRNA + S-adenosyl-L-methionine = N(4)-methylcytidine(1402) in 16S rRNA + S-adenosyl-L-homocysteine + H(+). Functionally, specifically methylates the N4 position of cytidine in position 1402 (C1402) of 16S rRNA. This is Ribosomal RNA small subunit methyltransferase H from Nitrosococcus oceani (strain ATCC 19707 / BCRC 17464 / JCM 30415 / NCIMB 11848 / C-107).